We begin with the raw amino-acid sequence, 217 residues long: NADPH-dependent 3-demethoxyubiquinone 3-hydroxylase, mitochondrial (217 aa).

Repeat copies occupy residues 48–129 and 130–217. The segment at 48–217 is 2 X approximate tandem repeats; the sequence is AVDQIIRVDH…SAAIYLSERF (170 aa). Fe cation is bound by residues glutamate 60, glutamate 90, histidine 93, glutamate 142, glutamate 178, and histidine 181. Residues tyrosine 212 and arginine 216 each contribute to the NADH site.

The protein belongs to the COQ7 family. As to quaternary structure, component of a multi-subunit COQ enzyme complex. Interacts with COQ8B and COQ6. Interacts with COQ9. Fe cation is required as a cofactor.

Its subcellular location is the mitochondrion inner membrane. It catalyses the reaction a 5-methoxy-2-methyl-3-(all-trans-polyprenyl)benzoquinone + NADH + O2 = a 3-demethylubiquinone + NAD(+) + H2O. It participates in cofactor biosynthesis; ubiquinone biosynthesis. Functionally, catalyzes the hydroxylation of the 5-methoxy-2-methyl-3-(all-trans-polyprenyl)benzoquinone at the C6 position and participates in the biosynthesis of ubiquinone. Catalyzes the reaction through a substrate-mediated reduction pathway, whereby NADH shuttles electrons to 5-methoxy-2-methyl-3-(all-trans-decaprenyl)benzoquinone, which then transfers the electrons to the two Fe(3+) centers. The binding of 5-methoxy-2-methyl-3-(all-trans-polyprenyl)benzoquinone (DMQn) mediates reduction of the diiron center by nicotinamide adenine dinucleotide (NADH) and initiates oxygen activation for subsequent DMQ hydroxylation. The physiological substrates are 5-methoxy-2-methyl-3-(all-trans-nonaprenyl)benzoquinone (DMQ(9)) and 5-methoxy-2-methyl-3-(all-trans-decaprenyl)benzoquinone (DMQ(10)), however in vitro the enzyme does not have any specificity concerning the length of the polyprenyl tail, and accepts tails of various lengths with similar efficiency. Also has a structural role in the COQ enzyme complex, stabilizing other COQ polypeptides. Involved in lifespan determination in a ubiquinone-independent manner. Plays a role in modulating mitochondrial stress responses, acting in the nucleus, perhaps via regulating gene expression, independent of its characterized mitochondrial function in ubiquinone biosynthesis. The protein is NADPH-dependent 3-demethoxyubiquinone 3-hydroxylase, mitochondrial of Rattus norvegicus (Rat).